The following is a 241-amino-acid chain: Octanoyltransferase (241 aa).

A BPL/LPL catalytic domain is found at 43-228 (AETPDEIWLV…CLTANLDGSP (186 aa)). Residues 83–90 (RGGQITYH), 159–161 (ALG), and 172–174 (GVS) each bind substrate. Catalysis depends on C190, which acts as the Acyl-thioester intermediate.

It belongs to the LipB family.

It is found in the cytoplasm. It carries out the reaction octanoyl-[ACP] + L-lysyl-[protein] = N(6)-octanoyl-L-lysyl-[protein] + holo-[ACP] + H(+). The protein operates within protein modification; protein lipoylation via endogenous pathway; protein N(6)-(lipoyl)lysine from octanoyl-[acyl-carrier-protein]: step 1/2. Its function is as follows. Catalyzes the transfer of endogenously produced octanoic acid from octanoyl-acyl-carrier-protein onto the lipoyl domains of lipoate-dependent enzymes. Lipoyl-ACP can also act as a substrate although octanoyl-ACP is likely to be the physiological substrate. The protein is Octanoyltransferase of Paraburkholderia xenovorans (strain LB400).